The following is a 142-amino-acid chain: Relaxin-3 (142 aa).

Residues 1 to 25 (MARYKLLLLLAVWVLTGELWPGAEA) form the signal peptide. 3 disulfides stabilise this stretch: cysteine 35–cysteine 129, cysteine 47–cysteine 142, and cysteine 128–cysteine 133. Residues 55-118 (SDILAHEAMG…GTPGALRGSR (64 aa)) constitute a propeptide, connecting peptide.

This sequence belongs to the insulin family. Heterodimer of a B chain and an A chain linked by two disulfide bonds.

The protein resides in the secreted. Its function is as follows. May play a role in neuropeptide signaling processes. Ligand for LGR7, RXFP3 and RXFP4. The chain is Relaxin-3 (RLN3) from Pan troglodytes (Chimpanzee).